Reading from the N-terminus, the 235-residue chain is MYEAVYAHPDGDSTVARHALTAADSEYDGIVVRNHGDEQADYDADAISDAYGVDVAAGIEVRADDPSRASGFVGNYRSDRTVVVVHGGDRRINRFAVEQPTVDVLAHPMRDDGDFNHVLANAAADNGVRVEFDFGPVLRASGGSRVRAIKELRKLRELVENAGAPFVVSASPSTHLQIRAPRDIIAVGETIGFDADTVREGLTEWGQIVERNRERQSGAVIEPGVRLEDDADDAE.

This sequence belongs to the eukaryotic/archaeal RNase P protein component 3 family. In terms of assembly, consists of a catalytic RNA component and at least 4-5 protein subunits.

Its subcellular location is the cytoplasm. It catalyses the reaction Endonucleolytic cleavage of RNA, removing 5'-extranucleotides from tRNA precursor.. Its function is as follows. Part of ribonuclease P, a protein complex that generates mature tRNA molecules by cleaving their 5'-ends. This chain is Ribonuclease P protein component 3, found in Haloarcula marismortui (strain ATCC 43049 / DSM 3752 / JCM 8966 / VKM B-1809) (Halobacterium marismortui).